Consider the following 60-residue polypeptide: Large ribosomal subunit protein bL32 (60 aa).

This sequence belongs to the bacterial ribosomal protein bL32 family.

This is Large ribosomal subunit protein bL32 from Clostridium perfringens (strain ATCC 13124 / DSM 756 / JCM 1290 / NCIMB 6125 / NCTC 8237 / Type A).